The sequence spans 432 residues: MRKPFYKILYVQVLFAICVGILLGHYWPDTGVAMKPLGDGFIKLIKMIIGPIIFCTVVTGIAGMSDMKKVGRVGGKALLYFEVVSTFALLIGLGAAHLLKPGVGFNIDPATLDTKAIAQYVSKAHGQSTVEFLMHIIPDTVFSAFANGDILQILLVSLFFGAALAVLGERARIVVQLIEQVSKVFFHIVHVITKVAPIGAFGAMAFTIGKYGLGSLVPLLKLIGTFYFTAIIFVLVVLGTIARMTGFSIVRFISYIKEELLIVLGTSSSEAALPHMMEKLEKLGCSRSVVGLVVPTGYSFNLDGTNIYMTMAVIFIAQATGIELTLMQQLTILAVAMITSKGASGVTGSGFITLAATLAVVPTIPVAGMVLILGIDRFMSECRALTNIIGNGVATVVVSAWERELDRKRLASVLNGGSGDVADLADVGQGVR.

Helical transmembrane passes span 8 to 28 (ILYVQVLFAICVGILLGHYWP), 44 to 64 (LIKMIIGPIIFCTVVTGIAGM), 78 to 98 (LLYFEVVSTFALLIGLGAAHL), 148 to 168 (GDILQILLVSLFFGAALAVLG), 188 to 208 (IVHVITKVAPIGAFGAMAFTI), 222 to 242 (LIGTFYFTAIIFVLVVLGTIA), 307 to 327 (IYMTMAVIFIAQATGIELTLM), and 355 to 375 (AATLAVVPTIPVAGMVLILGI).

The protein belongs to the dicarboxylate/amino acid:cation symporter (DAACS) (TC 2.A.23) family.

It is found in the cell inner membrane. Responsible for the transport of dicarboxylates such as succinate, fumarate, and malate from the periplasm across the membrane. This Cupriavidus necator (strain ATCC 17699 / DSM 428 / KCTC 22496 / NCIMB 10442 / H16 / Stanier 337) (Ralstonia eutropha) protein is C4-dicarboxylate transport protein.